The primary structure comprises 339 residues: tRNA dimethylallyltransferase (339 aa).

33 to 40 (GPTASGKT) lines the ATP pocket. 35–40 (TASGKT) is a binding site for substrate. 2 interaction with substrate tRNA regions span residues 58–61 (DSLL) and 182–186 (QRIQR).

It belongs to the IPP transferase family. As to quaternary structure, monomer. Mg(2+) serves as cofactor.

The catalysed reaction is adenosine(37) in tRNA + dimethylallyl diphosphate = N(6)-dimethylallyladenosine(37) in tRNA + diphosphate. Functionally, catalyzes the transfer of a dimethylallyl group onto the adenine at position 37 in tRNAs that read codons beginning with uridine, leading to the formation of N6-(dimethylallyl)adenosine (i(6)A). The polypeptide is tRNA dimethylallyltransferase (Acidithiobacillus ferrooxidans (strain ATCC 23270 / DSM 14882 / CIP 104768 / NCIMB 8455) (Ferrobacillus ferrooxidans (strain ATCC 23270))).